Reading from the N-terminus, the 1020-residue chain is Sodium/potassium-transporting ATPase subunit alpha-2 (1020 aa).

Positions methionine 1–alanine 5 are excised as a propeptide. The interval methionine 1–aspartate 31 is disordered. The Cytoplasmic segment spans residues glycine 6–proline 85. Serine 10 carries the post-translational modification Phosphoserine. Residues proline 80–proline 82 are interaction with phosphoinositide-3 kinase. Residues glutamate 86 to alanine 106 traverse the membrane as a helical segment. The Extracellular portion of the chain corresponds to isoleucine 107–tyrosine 129. Residues leucine 130 to alanine 150 traverse the membrane as a helical segment. The Cytoplasmic segment spans residues lysine 151–isoleucine 286. Polar residues predominate over residues aspartate 212–proline 227. The disordered stretch occupies residues aspartate 212 to histidine 231. A helical membrane pass occupies residues glutamate 287 to valine 306. Residues leucine 307–alanine 318 are Extracellular-facing. A helical transmembrane segment spans residues valine 319–alanine 336. Residues threonine 337–leucine 769 lie on the Cytoplasmic side of the membrane. Catalysis depends on aspartate 374, which acts as the 4-aspartylphosphate intermediate. Serine 439, serine 450, serine 496, and serine 559 each carry phosphoserine. At threonine 570 the chain carries Phosphothreonine. Phosphoserine is present on residues serine 587 and serine 672. Mg(2+) contacts are provided by aspartate 714 and aspartate 718. A helical membrane pass occupies residues lysine 770–leucine 789. Residues phenylalanine 790–leucine 799 are Extracellular-facing. A helical transmembrane segment spans residues glycine 800 to alanine 820. The Cytoplasmic segment spans residues tyrosine 821–lysine 840. Serine 826 is subject to Phosphoserine. A helical membrane pass occupies residues leucine 841–phenylalanine 863. Over phenylalanine 864–cysteine 915 the chain is Extracellular. The chain crosses the membrane as a helical span at residues histidine 916–lysine 935. The Cytoplasmic segment spans residues threonine 936–asparagine 948. Serine 940 carries the phosphoserine; by PKA modification. Residues lysine 949 to tyrosine 967 form a helical membrane-spanning segment. Residues cysteine 968–valine 982 are Extracellular-facing. The helical transmembrane segment at threonine 983 to lysine 1003 threads the bilayer. Residues leucine 1004 to tyrosine 1020 lie on the Cytoplasmic side of the membrane.

It belongs to the cation transport ATPase (P-type) (TC 3.A.3) family. Type IIC subfamily. In terms of assembly, the sodium/potassium-transporting ATPase is composed of a catalytic alpha subunit, an auxiliary non-catalytic beta subunit and an additional regulatory subunit. Interacts with regulatory subunit FXYD1.

The protein resides in the membrane. It is found in the cell membrane. It catalyses the reaction K(+)(out) + Na(+)(in) + ATP + H2O = K(+)(in) + Na(+)(out) + ADP + phosphate + H(+). In terms of biological role, this is the catalytic component of the active enzyme, which catalyzes the hydrolysis of ATP coupled with the exchange of sodium and potassium ions across the plasma membrane. This action creates the electrochemical gradient of sodium and potassium, providing the energy for active transport of various nutrients. The polypeptide is Sodium/potassium-transporting ATPase subunit alpha-2 (ATP1A2) (Bos taurus (Bovine)).